The chain runs to 625 residues: Arginine--tRNA ligase (625 aa).

Positions A117–H127 match the 'HIGH' region motif.

The protein belongs to the class-I aminoacyl-tRNA synthetase family.

The protein localises to the cytoplasm. It carries out the reaction tRNA(Arg) + L-arginine + ATP = L-arginyl-tRNA(Arg) + AMP + diphosphate. This chain is Arginine--tRNA ligase, found in Saccharolobus solfataricus (strain ATCC 35092 / DSM 1617 / JCM 11322 / P2) (Sulfolobus solfataricus).